The following is a 434-amino-acid chain: Transcriptional enhancer factor TEF-3 (434 aa).

Over residues 1 to 28 (MEGTAGTITSNEWSSPTSPEGSTASGGS) the composition is skewed to polar residues. Disordered stretches follow at residues 1-42 (MEGT…AEGV) and 188-215 (QPPL…PPWQ). A DNA-binding region (TEA) is located at residues 36–112 (DNDAEGVWSP…QVLARRKARE (77 aa)). The segment covering 201–213 (GPAPSPSAPPAPP) has biased composition (pro residues).

In terms of assembly, interacts with YAP1 and WWTR1/TAZ. As to expression, preferentially expressed in skeletal muscle. Lower levels in pancreas, placenta, and heart.

Its subcellular location is the nucleus. Transcription factor which plays a key role in the Hippo signaling pathway, a pathway involved in organ size control and tumor suppression by restricting proliferation and promoting apoptosis. The core of this pathway is composed of a kinase cascade wherein MST1/MST2, in complex with its regulatory protein SAV1, phosphorylates and activates LATS1/2 in complex with its regulatory protein MOB1, which in turn phosphorylates and inactivates YAP1 oncoprotein and WWTR1/TAZ. Acts by mediating gene expression of YAP1 and WWTR1/TAZ, thereby regulating cell proliferation, migration and epithelial mesenchymal transition (EMT) induction. Binds specifically and non-cooperatively to the Sph and GT-IIC 'enhansons' (5'-GTGGAATGT-3') and activates transcription. Binds to the M-CAT motif. The polypeptide is Transcriptional enhancer factor TEF-3 (TEAD4) (Homo sapiens (Human)).